Here is a 138-residue protein sequence, read N- to C-terminus: Sec-independent protein translocase protein TatB (138 aa).

Residues 1–21 (MFDIGFSELLLIAVVALVVLG) traverse the membrane as a helical segment. The interval 116 to 138 (VHHVHVPPPSTSTHGNNGQEKSQ) is disordered. Over residues 126–138 (TSTHGNNGQEKSQ) the composition is skewed to polar residues.

Belongs to the TatB family. In terms of assembly, the Tat system comprises two distinct complexes: a TatABC complex, containing multiple copies of TatA, TatB and TatC subunits, and a separate TatA complex, containing only TatA subunits. Substrates initially bind to the TatABC complex, which probably triggers association of the separate TatA complex to form the active translocon.

It is found in the cell inner membrane. Its function is as follows. Part of the twin-arginine translocation (Tat) system that transports large folded proteins containing a characteristic twin-arginine motif in their signal peptide across membranes. Together with TatC, TatB is part of a receptor directly interacting with Tat signal peptides. TatB may form an oligomeric binding site that transiently accommodates folded Tat precursor proteins before their translocation. This Xylella fastidiosa (strain Temecula1 / ATCC 700964) protein is Sec-independent protein translocase protein TatB.